A 196-amino-acid chain; its full sequence is Small ribosomal subunit protein uS4c (196 aa).

Residues 22 to 42 (TRKTPKSGSNPKKKFHSGKKE) form a disordered region. Positions 89–169 (MRLDNILFRL…LPKHLTIDTL (81 aa)) constitute an S4 RNA-binding domain.

The protein belongs to the universal ribosomal protein uS4 family. As to quaternary structure, part of the 30S ribosomal subunit. Contacts protein S5. The interaction surface between S4 and S5 is involved in control of translational fidelity.

It is found in the plastid. The protein localises to the chloroplast. Functionally, one of the primary rRNA binding proteins, it binds directly to 16S rRNA where it nucleates assembly of the body of the 30S subunit. With S5 and S12 plays an important role in translational accuracy. The protein is Small ribosomal subunit protein uS4c (rps4) of Melica altissima (Siberian melic grass).